We begin with the raw amino-acid sequence, 147 residues long: MSEELQPVFSIERLYVKDLSLEVPHAPQIFLEQGEPEVDMRVSTGSQKLEDGYYNVDVTVTVTAKLDNERTMFLNEVTQSGIFRLENIPEEDADLLLGVACPNILFPYAREAVSGTVTRAGFPPVLLAPINFEAIYQQQQEAEAAGA.

It belongs to the SecB family. In terms of assembly, homotetramer, a dimer of dimers. One homotetramer interacts with 1 SecA dimer.

The protein localises to the cytoplasm. Its function is as follows. One of the proteins required for the normal export of preproteins out of the cell cytoplasm. It is a molecular chaperone that binds to a subset of precursor proteins, maintaining them in a translocation-competent state. It also specifically binds to its receptor SecA. The protein is Protein-export protein SecB of Neisseria meningitidis serogroup A / serotype 4A (strain DSM 15465 / Z2491).